We begin with the raw amino-acid sequence, 855 residues long: Serine/threonine-protein kinase HAL5 (855 aa).

Disordered stretches follow at residues 1 to 166 (MGDE…VERQ) and 214 to 261 (RRNS…GNGT). Serine 17 and serine 19 each carry phosphoserine. The span at 31 to 45 (ISGSNNAAAPSSRPG) shows a compositional bias: polar residues. Positions 57–74 (IITSNVSSPSISPVHSPV) are enriched in low complexity. Serine 68 and serine 72 each carry phosphoserine. Polar residues predominate over residues 94 to 114 (LSPSREPSLNSENEMFSQESF). Residues 125–139 (LLEREDLQNKKEEKA) are compositionally biased toward basic and acidic residues. A Phosphoserine modification is found at serine 160. Residues 248–258 (GMNSNATNNVG) show a composition bias toward low complexity. Residues serine 273, serine 277, serine 324, serine 333, serine 336, serine 358, serine 391, and serine 395 each carry the phosphoserine modification. A disordered region spans residues 319–347 (NKNVDSGDEKDADASVNSGDDGDNDSEAN). Disordered stretches follow at residues 401-427 (SQTV…DGKN) and 457-497 (LKSE…SHKP). Positions 462–474 (TKGNNGEGRSNSN) are enriched in polar residues. The 335-residue stretch at 503–837 (GKYIGVVGAG…IEQLLQSSWM (335 aa)) folds into the Protein kinase domain. Residues 509 to 517 (VGAGAYGVV) and lysine 546 each bind ATP. Catalysis depends on aspartate 688, which acts as the Proton acceptor.

It belongs to the protein kinase superfamily. CAMK Ser/Thr protein kinase family. NPR/HAL subfamily. HAL5 sub-subfamily.

The enzyme catalyses L-seryl-[protein] + ATP = O-phospho-L-seryl-[protein] + ADP + H(+). The catalysed reaction is L-threonyl-[protein] + ATP = O-phospho-L-threonyl-[protein] + ADP + H(+). Functionally, protein kinase involved in salt tolerance and pH sensitivity, probably by regulating plasma membrane potential and cation influx. Positively controls the TRK1-TRK2 potassium transport system in response to potassium starvation. Stabilizes TRK1 in the plasma membrane by preventing its vacuolar sorting and degradation. Also stabilizes other plasma membrane nutrient transporters like CAN1, FUR4 and HXT1. May itself be subject to regulation by ARL1. The chain is Serine/threonine-protein kinase HAL5 (HAL5) from Saccharomyces cerevisiae (strain YJM789) (Baker's yeast).